We begin with the raw amino-acid sequence, 293 residues long: Elongation factor Ts (293 aa).

An involved in Mg(2+) ion dislocation from EF-Tu region spans residues 80–83 (TDFV).

It belongs to the EF-Ts family.

It is found in the cytoplasm. Its function is as follows. Associates with the EF-Tu.GDP complex and induces the exchange of GDP to GTP. It remains bound to the aminoacyl-tRNA.EF-Tu.GTP complex up to the GTP hydrolysis stage on the ribosome. This is Elongation factor Ts from Paraburkholderia phymatum (strain DSM 17167 / CIP 108236 / LMG 21445 / STM815) (Burkholderia phymatum).